The sequence spans 324 residues: GTPase Era (324 aa).

An Era-type G domain is found at Lys31 to His199. The segment at Gly39–Ser46 is G1. Gly39–Ser46 serves as a coordination point for GTP. Positions Gln65–Asn69 are G2. The G3 stretch occupies residues Asp86–Gly89. Residues Asp86–Ile90 and Asn148–Asp151 contribute to the GTP site. The interval Asn148–Asp151 is G4. Residues Phe178–Ala180 form a G5 region. The 77-residue stretch at Thr230–Pro306 folds into the KH type-2 domain.

The protein belongs to the TRAFAC class TrmE-Era-EngA-EngB-Septin-like GTPase superfamily. Era GTPase family. In terms of assembly, monomer.

The protein localises to the cytoplasm. It is found in the cell inner membrane. Functionally, an essential GTPase that binds both GDP and GTP, with rapid nucleotide exchange. Plays a role in 16S rRNA processing and 30S ribosomal subunit biogenesis and possibly also in cell cycle regulation and energy metabolism. In Nostoc sp. (strain PCC 7120 / SAG 25.82 / UTEX 2576), this protein is GTPase Era.